The following is a 272-amino-acid chain: Putative phosphoenolpyruvate synthase regulatory protein (272 aa).

Residue 152–159 (GVSRCGKT) participates in ADP binding.

The protein belongs to the pyruvate, phosphate/water dikinase regulatory protein family. PSRP subfamily.

It carries out the reaction [pyruvate, water dikinase] + ADP = [pyruvate, water dikinase]-phosphate + AMP + H(+). The catalysed reaction is [pyruvate, water dikinase]-phosphate + phosphate + H(+) = [pyruvate, water dikinase] + diphosphate. In terms of biological role, bifunctional serine/threonine kinase and phosphorylase involved in the regulation of the phosphoenolpyruvate synthase (PEPS) by catalyzing its phosphorylation/dephosphorylation. The protein is Putative phosphoenolpyruvate synthase regulatory protein of Pseudomonas fluorescens (strain SBW25).